The sequence spans 133 residues: Small ribosomal subunit protein uS8 (133 aa).

Belongs to the universal ribosomal protein uS8 family. In terms of assembly, part of the 30S ribosomal subunit. Contacts proteins S5 and S12.

Functionally, one of the primary rRNA binding proteins, it binds directly to 16S rRNA central domain where it helps coordinate assembly of the platform of the 30S subunit. The chain is Small ribosomal subunit protein uS8 from Nostoc punctiforme (strain ATCC 29133 / PCC 73102).